The primary structure comprises 424 residues: Arogenate dehydratase 1 (424 aa).

The transit peptide at 1–52 (MQSLTPSSGVNLKSIIRKTSLPPGQTRFITGRVIKCGYQVDSANTVNTAGAP) directs the protein to the chloroplast. The Prephenate dehydratase domain occupies 131 to 308 (RVAYQGVPGA…NVTRFVMLAR (178 aa)). The ACT domain occupies 321 to 412 (TSIVFAHEGT…SFLRVLGSYP (92 aa)).

Mostly expressed in flowers, especially in petals (corollas and tubes), and, at low levels, in roots, stems, leaves, pistils, stamens, ovaries and sepals.

It is found in the plastid. The protein resides in the chloroplast stroma. It carries out the reaction L-arogenate + H(+) = L-phenylalanine + CO2 + H2O. It functions in the pathway amino-acid biosynthesis; L-phenylalanine biosynthesis; L-phenylalanine from L-arogenate: step 1/1. Its function is as follows. Converts L-arogenate produced from the shikimate-chorismate pathway into phenylalanine (Phe). Involved in floral volatile benzenoids and phenylpropanoids (FVBP) production. The polypeptide is Arogenate dehydratase 1 (Petunia hybrida (Petunia)).